A 370-amino-acid polypeptide reads, in one-letter code: Phosphate-binding protein PstS 3 (370 aa).

The first 22 residues, 1-22 (MKLNRFGAAVGVLAAGALVLSA), serve as a signal peptide directing secretion. C23 carries the N-palmitoyl cysteine lipid modification. The S-diacylglycerol cysteine moiety is linked to residue C23. Residues 56 to 58 (STA), S86, D104, and 191 to 193 (SGT) each bind phosphate.

Belongs to the PstS family. The complex is composed of two ATP-binding proteins (PstB), two transmembrane proteins (PstC and PstA) and a solute-binding protein (PstS).

It is found in the cell membrane. Its function is as follows. Part of the ABC transporter complex PstSACB involved in phosphate import. This is Phosphate-binding protein PstS 3 (pstS3) from Mycobacterium bovis (strain ATCC BAA-935 / AF2122/97).